The primary structure comprises 310 residues: Homoserine kinase (310 aa).

91-101 contributes to the ATP binding site; that stretch reads PIGSGLGSSAC.

Belongs to the GHMP kinase family. Homoserine kinase subfamily.

The protein localises to the cytoplasm. It catalyses the reaction L-homoserine + ATP = O-phospho-L-homoserine + ADP + H(+). It functions in the pathway amino-acid biosynthesis; L-threonine biosynthesis; L-threonine from L-aspartate: step 4/5. Functionally, catalyzes the ATP-dependent phosphorylation of L-homoserine to L-homoserine phosphate. The polypeptide is Homoserine kinase (Escherichia coli O81 (strain ED1a)).